Here is a 502-residue protein sequence, read N- to C-terminus: Maturase K (502 aa).

It belongs to the intron maturase 2 family. MatK subfamily.

It is found in the plastid. The protein resides in the chloroplast. Its function is as follows. Usually encoded in the trnK tRNA gene intron. Probably assists in splicing its own and other chloroplast group II introns. In Ehretia anacua (Sandpaper tree), this protein is Maturase K.